The sequence spans 311 residues: tRNA dimethylallyltransferase (311 aa).

An ATP-binding site is contributed by 19 to 26 (GPSGSGKS). Residue 21-26 (SGSGKS) participates in substrate binding. Residues 44 to 47 (DSLS) are interaction with substrate tRNA.

The protein belongs to the IPP transferase family. Monomer. Mg(2+) serves as cofactor.

The enzyme catalyses adenosine(37) in tRNA + dimethylallyl diphosphate = N(6)-dimethylallyladenosine(37) in tRNA + diphosphate. Catalyzes the transfer of a dimethylallyl group onto the adenine at position 37 in tRNAs that read codons beginning with uridine, leading to the formation of N6-(dimethylallyl)adenosine (i(6)A). The protein is tRNA dimethylallyltransferase of Helicobacter pylori (strain ATCC 700392 / 26695) (Campylobacter pylori).